A 475-amino-acid chain; its full sequence is Cytochrome P450 monooxygenase opdE (475 aa).

Residues 10–32 (VQNIPVLLLSCGFLAILFRSLVL) traverse the membrane as a helical segment. C457 is a heme binding site.

This sequence belongs to the cytochrome P450 family. Requires heme as cofactor.

It localises to the membrane. It participates in secondary metabolite biosynthesis. Cytochrome P450 monooxygenase; part of the gene cluster that mediates the biosynthesis of oxopyrrolidines, polyketide-amino acid hybrid compounds with feature structures of tetramic acid. Does not seem to play a role in oxopyrrolidines A and B biosynthesis. May be involved in further modifications of these oxopyrrolidines. This chain is Cytochrome P450 monooxygenase opdE, found in Penicillium oxalicum (strain 114-2 / CGMCC 5302) (Penicillium decumbens).